The following is a 462-amino-acid chain: GTPase Der (462 aa).

2 consecutive EngA-type G domains span residues 2 to 164 (QKVI…EEKV) and 198 to 369 (IRVG…KNYT). Residues 8–15 (GKPNVGKS), 55–59 (DSGGL), 116–119 (NKID), 204–211 (GRVNVGKS), 251–255 (DTAGI), and 315–318 (NKWD) each bind GTP. Residues 370 to 454 (QKIQTSKLNE…PIVLIPKKRG (85 aa)) form the KH-like domain.

The protein belongs to the TRAFAC class TrmE-Era-EngA-EngB-Septin-like GTPase superfamily. EngA (Der) GTPase family. As to quaternary structure, associates with the 50S ribosomal subunit.

Its function is as follows. GTPase that plays an essential role in the late steps of ribosome biogenesis. The sequence is that of GTPase Der from Campylobacter concisus (strain 13826).